We begin with the raw amino-acid sequence, 231 residues long: Large ribosomal subunit protein uL1 (231 aa).

This sequence belongs to the universal ribosomal protein uL1 family. Part of the 50S ribosomal subunit.

In terms of biological role, binds directly to 23S rRNA. The L1 stalk is quite mobile in the ribosome, and is involved in E site tRNA release. Its function is as follows. Protein L1 is also a translational repressor protein, it controls the translation of the L11 operon by binding to its mRNA. This chain is Large ribosomal subunit protein uL1, found in Beijerinckia indica subsp. indica (strain ATCC 9039 / DSM 1715 / NCIMB 8712).